The sequence spans 130 residues: Large ribosomal subunit protein bL17 (130 aa).

This sequence belongs to the bacterial ribosomal protein bL17 family. As to quaternary structure, part of the 50S ribosomal subunit. Contacts protein L32.

The sequence is that of Large ribosomal subunit protein bL17 from Pectobacterium atrosepticum (strain SCRI 1043 / ATCC BAA-672) (Erwinia carotovora subsp. atroseptica).